We begin with the raw amino-acid sequence, 195 residues long: HTH-type transcriptional regulator BetI (195 aa).

The region spanning 8 to 68 (SIRRRQLIDA…ATMRDITSQL (61 aa)) is the HTH tetR-type domain. Residues 31-50 (TIAQIARRAGVSTGIISHYF) constitute a DNA-binding region (H-T-H motif).

It functions in the pathway amine and polyamine biosynthesis; betaine biosynthesis via choline pathway [regulation]. Its function is as follows. Repressor involved in the biosynthesis of the osmoprotectant glycine betaine. It represses transcription of the choline transporter BetT and the genes of BetAB involved in the synthesis of glycine betaine. The sequence is that of HTH-type transcriptional regulator BetI from Escherichia coli O8 (strain IAI1).